The chain runs to 427 residues: MSTSFENKATNRGIITFTISQDEIKPALDQAFNKVKKDLNVPGFRKGHMPRTVFNQKFGEEALYENALNLVLPKAYEAAVAELGLDVVAQPKIDVVSMEKGQDWKLTAEVVTKPEVKLGDYKDLSVEVDASKEVSDEEVDAKVERERNNLAELTVKDGEAAQGDTVVIDFVGSVDGVEFDGGKGDNFSLELGSGQFIPGFEEQLVGSKAGQTVDVNVTFPEDYQAEDLAGKDAKFVTTIHEVKTKEVPALDDELAKDIDEEVETLDELKAKYRKELESAKEIAFDDAVEGAAIELAVANAEIVELPEEMVHDEVHRAMNEFMGNMQRQGISPEMYFQLTGTTEEDLHKQYQADADKRVKTNLVIEAIAAAEGFEATDEEIEKEITDLASEYNMEADQVRGLLSADMLKHDIAMKKAVDVITSSATVK.

The 86-residue stretch at 163–248 (GDTVVIDFVG…IHEVKTKEVP (86 aa)) folds into the PPIase FKBP-type domain.

Belongs to the FKBP-type PPIase family. Tig subfamily.

It is found in the cytoplasm. It carries out the reaction [protein]-peptidylproline (omega=180) = [protein]-peptidylproline (omega=0). Its function is as follows. Involved in protein export. Acts as a chaperone by maintaining the newly synthesized protein in an open conformation. Functions as a peptidyl-prolyl cis-trans isomerase. The polypeptide is Trigger factor (Streptococcus agalactiae serotype Ia (strain ATCC 27591 / A909 / CDC SS700)).